A 121-amino-acid chain; its full sequence is Large ribosomal subunit protein bL12 (121 aa).

It belongs to the bacterial ribosomal protein bL12 family. In terms of assembly, homodimer. Part of the ribosomal stalk of the 50S ribosomal subunit. Forms a multimeric L10(L12)X complex, where L10 forms an elongated spine to which 2 to 4 L12 dimers bind in a sequential fashion. Binds GTP-bound translation factors.

Its function is as follows. Forms part of the ribosomal stalk which helps the ribosome interact with GTP-bound translation factors. Is thus essential for accurate translation. This is Large ribosomal subunit protein bL12 from Xanthomonas axonopodis pv. citri (strain 306).